Consider the following 141-residue polypeptide: Hemoglobin subunit alpha-A (141 aa).

Residues 1-141 (VLSAADKTNV…VGTVLTAKYR (141 aa)) form the Globin domain. Residue H58 coordinates O2. H87 provides a ligand contact to heme b.

This sequence belongs to the globin family. As to quaternary structure, heterotetramer of two alpha chains and two beta chains. In terms of tissue distribution, red blood cells.

Involved in oxygen transport from the lung to the various peripheral tissues. The polypeptide is Hemoglobin subunit alpha-A (HBAA) (Branta canadensis (Canada goose)).